Here is a 183-residue protein sequence, read N- to C-terminus: Ribosome rescue factor SmrB (183 aa).

In terms of domain architecture, Smr spans leucine 98–glutamate 173.

This sequence belongs to the SmrB family. In terms of assembly, associates with collided ribosomes, but not with correctly translating polysomes.

Acts as a ribosome collision sensor. Detects stalled/collided disomes (pairs of ribosomes where the leading ribosome is stalled and a second ribosome has collided with it) and endonucleolytically cleaves mRNA at the 5' boundary of the stalled ribosome. Stalled/collided disomes form a new interface (primarily via the 30S subunits) that binds SmrB. Cleaved mRNA becomes available for tmRNA ligation, leading to ribosomal subunit dissociation and rescue of stalled ribosomes. In Salmonella agona (strain SL483), this protein is Ribosome rescue factor SmrB.